The sequence spans 118 residues: Large ribosomal subunit protein bL20 (118 aa).

It belongs to the bacterial ribosomal protein bL20 family.

Its function is as follows. Binds directly to 23S ribosomal RNA and is necessary for the in vitro assembly process of the 50S ribosomal subunit. It is not involved in the protein synthesizing functions of that subunit. This Shigella dysenteriae serotype 1 (strain Sd197) protein is Large ribosomal subunit protein bL20.